A 145-amino-acid polypeptide reads, in one-letter code: Protein SprT-like (145 aa).

One can recognise a SprT-like domain in the interval 4-140 (TNYVQEVSLA…VCGNCHGKLM (137 aa)). Residue His-64 coordinates Zn(2+). The active site involves Glu-65. Residue His-68 participates in Zn(2+) binding.

Belongs to the SprT family. Zn(2+) is required as a cofactor.

Its subcellular location is the cytoplasm. This chain is Protein SprT-like, found in Streptococcus pyogenes serotype M1.